Here is a 371-residue protein sequence, read N- to C-terminus: Histidinol-phosphate aminotransferase (371 aa).

N6-(pyridoxal phosphate)lysine is present on lysine 228.

It belongs to the class-II pyridoxal-phosphate-dependent aminotransferase family. Histidinol-phosphate aminotransferase subfamily. The cofactor is pyridoxal 5'-phosphate.

It catalyses the reaction L-histidinol phosphate + 2-oxoglutarate = 3-(imidazol-4-yl)-2-oxopropyl phosphate + L-glutamate. Its pathway is amino-acid biosynthesis; L-histidine biosynthesis; L-histidine from 5-phospho-alpha-D-ribose 1-diphosphate: step 7/9. The protein is Histidinol-phosphate aminotransferase of Methanococcus aeolicus (strain ATCC BAA-1280 / DSM 17508 / OCM 812 / Nankai-3).